The sequence spans 315 residues: uncharacterized protein (315 aa).

A compositionally biased stretch (polar residues) spans 1–23 (MSNTDALNTANTQITENVDTSSM). Residues 1 to 31 (MSNTDALNTANTQITENVDTSSMKVEKTHDS) are disordered.

This is an uncharacterized protein from Acanthamoeba polyphaga mimivirus (APMV).